Consider the following 384-residue polypeptide: Cobalt-precorrin-5B C(1)-methyltransferase (384 aa).

This sequence belongs to the CbiD family.

The enzyme catalyses Co-precorrin-5B + S-adenosyl-L-methionine = Co-precorrin-6A + S-adenosyl-L-homocysteine. Its pathway is cofactor biosynthesis; adenosylcobalamin biosynthesis; cob(II)yrinate a,c-diamide from sirohydrochlorin (anaerobic route): step 6/10. In terms of biological role, catalyzes the methylation of C-1 in cobalt-precorrin-5B to form cobalt-precorrin-6A. The sequence is that of Cobalt-precorrin-5B C(1)-methyltransferase from Ruminiclostridium cellulolyticum (strain ATCC 35319 / DSM 5812 / JCM 6584 / H10) (Clostridium cellulolyticum).